The following is a 611-amino-acid chain: Fatty acid photodecarboxylase, chloroplastic (611 aa).

The tract at residues 1 to 22 (MMLGPKTVTRGATKGAAPRSMA) is disordered. Residues 1–36 (MMLGPKTVTRGATKGAAPRSMAARRVGGARRLSVRA) constitute a chloroplast transit peptide. Residues 55-56 (TA), glutamate 76, methionine 125, serine 129, and 133-136 (NATL) contribute to the FAD site. Residues cysteine 392, arginine 412, tyrosine 427, and glutamine 447 each contribute to the hexadecanoate site. Glycine 582 serves as a coordination point for FAD.

It belongs to the GMC oxidoreductase family. FAD is required as a cofactor.

The protein localises to the plastid. It localises to the chloroplast. It carries out the reaction a long-chain fatty acid + hnu + H(+) = a long-chain alkane + CO2. The catalysed reaction is hnu + hexadecanoate + H(+) = pentadecane + CO2. Activated by blue light and repressed by red light. Its function is as follows. Catalyzes the decarboxylation of free fatty acids to n-alkanes or n-alkenes in response to blue light. Substrate preference is toward fatty acids with C17 or C18 chains. Saturated fatty acids are converted to alkanes, not alkenes. The decarboxylation is initiated through electron abstraction from the fatty acid by the photo-excited FAD. In Chlamydomonas reinhardtii (Chlamydomonas smithii), this protein is Fatty acid photodecarboxylase, chloroplastic.